Here is a 342-residue protein sequence, read N- to C-terminus: Anthranilate phosphoribosyltransferase (342 aa).

Residues glycine 84, 87–88 (GD), threonine 92, 94–97 (NITT), 112–120 (KHGNRSVSS), and serine 124 contribute to the 5-phospho-alpha-D-ribose 1-diphosphate site. Position 84 (glycine 84) interacts with anthranilate. Position 96 (threonine 96) interacts with Mg(2+). Asparagine 115 contributes to the anthranilate binding site. An anthranilate-binding site is contributed by arginine 170. Mg(2+) is bound by residues aspartate 228 and glutamate 229.

It belongs to the anthranilate phosphoribosyltransferase family. As to quaternary structure, homodimer. Mg(2+) serves as cofactor.

The enzyme catalyses N-(5-phospho-beta-D-ribosyl)anthranilate + diphosphate = 5-phospho-alpha-D-ribose 1-diphosphate + anthranilate. It participates in amino-acid biosynthesis; L-tryptophan biosynthesis; L-tryptophan from chorismate: step 2/5. Functionally, catalyzes the transfer of the phosphoribosyl group of 5-phosphorylribose-1-pyrophosphate (PRPP) to anthranilate to yield N-(5'-phosphoribosyl)-anthranilate (PRA). In Corynebacterium efficiens (strain DSM 44549 / YS-314 / AJ 12310 / JCM 11189 / NBRC 100395), this protein is Anthranilate phosphoribosyltransferase.